The chain runs to 334 residues: Fructose-1,6-bisphosphatase class 1 (334 aa).

Mg(2+) contacts are provided by glutamate 90, aspartate 113, leucine 115, and aspartate 116. Substrate-binding positions include 116-119 (DGSS), asparagine 209, tyrosine 242, and lysine 272. Glutamate 278 is a Mg(2+) binding site.

This sequence belongs to the FBPase class 1 family. Homotetramer. Requires Mg(2+) as cofactor.

Its subcellular location is the cytoplasm. The catalysed reaction is beta-D-fructose 1,6-bisphosphate + H2O = beta-D-fructose 6-phosphate + phosphate. It functions in the pathway carbohydrate biosynthesis; gluconeogenesis. In Actinobacillus pleuropneumoniae serotype 7 (strain AP76), this protein is Fructose-1,6-bisphosphatase class 1.